Consider the following 292-residue polypeptide: MATLRDIKRKIDAVKKTSQITKAMNMVAAAKLRGAQQNMERFHPYAEKFNEVIERLAEGVEDAGQYVLLTPREEVKKIELVLVTADRGLCGSFNNNLIVMAERFLKAKQAEGCQVRLTAVGRKGGDYFRRRTFEVRKRMTGLLNKPSYEDAAVLGRELIEQFEIGECDEVYVIYSRFLSMVRQQATLMKLLPIAPAKKTEAEEKGRLEYLFEPSHEALLTDLLPNYVFIEILESLYQTAVGEHAARMAAMENATSNCKELVKTLTLTYNKARQAGITKELMDIVGGAEALKK.

Belongs to the ATPase gamma chain family. F-type ATPases have 2 components, CF(1) - the catalytic core - and CF(0) - the membrane proton channel. CF(1) has five subunits: alpha(3), beta(3), gamma(1), delta(1), epsilon(1). CF(0) has three main subunits: a, b and c.

The protein localises to the cell inner membrane. In terms of biological role, produces ATP from ADP in the presence of a proton gradient across the membrane. The gamma chain is believed to be important in regulating ATPase activity and the flow of protons through the CF(0) complex. This is ATP synthase gamma chain from Syntrophobacter fumaroxidans (strain DSM 10017 / MPOB).